We begin with the raw amino-acid sequence, 339 residues long: Phosphate acyltransferase (339 aa).

Belongs to the PlsX family. Homodimer. Probably interacts with PlsY.

It localises to the cytoplasm. The catalysed reaction is a fatty acyl-[ACP] + phosphate = an acyl phosphate + holo-[ACP]. It functions in the pathway lipid metabolism; phospholipid metabolism. Catalyzes the reversible formation of acyl-phosphate (acyl-PO(4)) from acyl-[acyl-carrier-protein] (acyl-ACP). This enzyme utilizes acyl-ACP as fatty acyl donor, but not acyl-CoA. The protein is Phosphate acyltransferase of Helicobacter acinonychis (strain Sheeba).